The sequence spans 404 residues: Glucose-1-phosphate adenylyltransferase (404 aa).

Residues Tyr-99, Gly-164, 179–180, and Ser-197 contribute to the alpha-D-glucose 1-phosphate site; that span reads EK.

Belongs to the bacterial/plant glucose-1-phosphate adenylyltransferase family.

It carries out the reaction alpha-D-glucose 1-phosphate + ATP + H(+) = ADP-alpha-D-glucose + diphosphate. The protein operates within capsule biogenesis; capsule polysaccharide biosynthesis. It participates in glycan biosynthesis; glycogen biosynthesis. In terms of biological role, involved in the biosynthesis of ADP-glucose, a building block, required in the biosynthesis of maltose-1-phosphate (M1P) and in the elongation reactions to produce linear alpha-1,4-glucans. Catalyzes the reaction between ATP and alpha-D-glucose 1-phosphate (G1P) to produce pyrophosphate and ADP-Glc. This Mycobacterium bovis (strain ATCC BAA-935 / AF2122/97) protein is Glucose-1-phosphate adenylyltransferase.